Here is a 253-residue protein sequence, read N- to C-terminus: Proteasome subunit alpha type-7 (253 aa).

This sequence belongs to the peptidase T1A family. In terms of assembly, the 26S proteasome consists of a 20S proteasome core and two 19S regulatory subunits. The 20S proteasome core is composed of 28 subunits that are arranged in four stacked rings, resulting in a barrel-shaped structure. The two end rings are each formed by seven alpha subunits, and the two central rings are each formed by seven beta subunits. The catalytic chamber with the active sites is on the inside of the barrel.

It localises to the cytoplasm. It is found in the nucleus. In terms of biological role, the proteasome is a multicatalytic proteinase complex which is characterized by its ability to cleave peptides with Arg, Phe, Tyr, Leu, and Glu adjacent to the leaving group at neutral or slightly basic pH. The proteasome has an ATP-dependent proteolytic activity. The chain is Proteasome subunit alpha type-7 (pas-4) from Caenorhabditis elegans.